A 223-amino-acid chain; its full sequence is Glucosyl-3-phosphoglycerate phosphatase (223 aa).

A substrate-binding site is contributed by Arg10. His11 acts as the Tele-phosphohistidine intermediate in catalysis. An Isoglutamyl lysine isopeptide (Lys-Gln) (interchain with Q-Cter in protein Pup) cross-link involves residue Lys47. Arg60 is a binding site for substrate. Residue Glu84 is the Proton donor/acceptor of the active site. Residue His159 participates in substrate binding.

Belongs to the phosphoglycerate mutase family. Homodimer. Dimerization of the enzyme is essential for its dephosphorylation activity.

It catalyses the reaction (2R)-2-O-(alpha-D-glucopyranosyl)-3-phospho-glycerate + H2O = (2R)-2-O-(alpha-D-glucopyranosyl)-glycerate + phosphate. The enzyme catalyses 2-O-(alpha-D-mannosyl)-3-phosphoglycerate + H2O = (2R)-2-O-(alpha-D-mannosyl)-glycerate + phosphate. It carries out the reaction (2R)-2-O-[alpha-D-mannopyranosyl-(1-&gt;2)-alpha-D-glucopyranosyl]-3-phospho-glycerate + H2O = (2R)-2-O-[alpha-D-mannopyranosyl-(1-&gt;2)-alpha-D-glucopyranosyl]-glycerate + phosphate. Progressively inhibited by cobalt ions at concentrations between 10-50 mM and by copper ions at any concentration between 1-50 mM. Involved in the biosynthesis of mycobacterial methylglucose lipopolysaccharides (MGLPs). Catalyzes the dephosphorylation of glucosyl-3-phosphoglycerate (GPG) to glucosylglycerate (GG). GPG is the preferred substrate, but GpgP also exhibits low dephosphorylation activity on mannosyl-3-phosphoglycerate (MPG) and mannosylglucosyl-3-phosphoglycerate (MGPG) in vitro. Shows only trace of phosphoglycerate mutase (PGM) activity. The polypeptide is Glucosyl-3-phosphoglycerate phosphatase (Mycobacterium tuberculosis (strain ATCC 25618 / H37Rv)).